Consider the following 1408-residue polypeptide: DNA-directed RNA polymerase subunit beta' (1408 aa).

Residues cysteine 70, cysteine 72, cysteine 85, and cysteine 88 each contribute to the Zn(2+) site. Mg(2+)-binding residues include aspartate 460, aspartate 462, and aspartate 464. Zn(2+)-binding residues include cysteine 822, cysteine 896, cysteine 903, and cysteine 906. The segment at 1386–1408 (DTGEAPPLSEEETGEIRNSGYAV) is disordered.

The protein belongs to the RNA polymerase beta' chain family. The RNAP catalytic core consists of 2 alpha, 1 beta, 1 beta' and 1 omega subunit. When a sigma factor is associated with the core the holoenzyme is formed, which can initiate transcription. It depends on Mg(2+) as a cofactor. Requires Zn(2+) as cofactor.

It carries out the reaction RNA(n) + a ribonucleoside 5'-triphosphate = RNA(n+1) + diphosphate. In terms of biological role, DNA-dependent RNA polymerase catalyzes the transcription of DNA into RNA using the four ribonucleoside triphosphates as substrates. In Nitrosospira multiformis (strain ATCC 25196 / NCIMB 11849 / C 71), this protein is DNA-directed RNA polymerase subunit beta'.